We begin with the raw amino-acid sequence, 237 residues long: Pyridoxine 5'-phosphate synthase (237 aa).

The 3-amino-2-oxopropyl phosphate site is built by Asn7 and Arg18. His43 serves as the catalytic Proton acceptor. Arg45 and His50 together coordinate 1-deoxy-D-xylulose 5-phosphate. Glu70 acts as the Proton acceptor in catalysis. A 1-deoxy-D-xylulose 5-phosphate-binding site is contributed by Thr100. His190 (proton donor) is an active-site residue. Residues Asp191 and 213–214 (GH) each bind 3-amino-2-oxopropyl phosphate.

This sequence belongs to the PNP synthase family. In terms of assembly, homooctamer; tetramer of dimers.

It is found in the cytoplasm. The enzyme catalyses 3-amino-2-oxopropyl phosphate + 1-deoxy-D-xylulose 5-phosphate = pyridoxine 5'-phosphate + phosphate + 2 H2O + H(+). It participates in cofactor biosynthesis; pyridoxine 5'-phosphate biosynthesis; pyridoxine 5'-phosphate from D-erythrose 4-phosphate: step 5/5. Catalyzes the complicated ring closure reaction between the two acyclic compounds 1-deoxy-D-xylulose-5-phosphate (DXP) and 3-amino-2-oxopropyl phosphate (1-amino-acetone-3-phosphate or AAP) to form pyridoxine 5'-phosphate (PNP) and inorganic phosphate. The polypeptide is Pyridoxine 5'-phosphate synthase (Bacteroides fragilis (strain ATCC 25285 / DSM 2151 / CCUG 4856 / JCM 11019 / LMG 10263 / NCTC 9343 / Onslow / VPI 2553 / EN-2)).